We begin with the raw amino-acid sequence, 232 residues long: Probable anion ABC transporter permease protein HVO_1887 (232 aa).

Positions Thr-16 to Gly-217 constitute an ABC transmembrane type-1 domain. The next 5 membrane-spanning stretches (helical) occupy residues Ser-23–Phe-43, Val-55–Leu-75, Met-93–Val-113, Ile-146–Ile-166, and Thr-198–Ala-218.

The protein belongs to the binding-protein-dependent transport system permease family. The complex is composed of two ATP-binding proteins (HVO_1886), two transmembrane proteins (HVO_1887) and a solute-binding protein (HVO_1888).

Its subcellular location is the cell membrane. In terms of biological role, part of an ABC transporter complex involved in anions import. Responsible for the translocation of the substrate across the membrane. This is Probable anion ABC transporter permease protein HVO_1887 from Haloferax volcanii (strain ATCC 29605 / DSM 3757 / JCM 8879 / NBRC 14742 / NCIMB 2012 / VKM B-1768 / DS2) (Halobacterium volcanii).